The sequence spans 459 residues: E3 ubiquitin-protein ligase RNF14 (459 aa).

The RWD domain maps to 10–129 (DELLALASIY…QFLKEETLDF (120 aa)). Positions 141-169 (SGSQPQCEPAQKHAADASGEKSKVQDLDP) are disordered. Residues 150–169 (AQKHAADASGEKSKVQDLDP) are compositionally biased toward basic and acidic residues. Positions 200-441 (KAFCCGICYS…NPDSPCYNQL (242 aa)) are TRIAD supradomain. C204, C207, C222, H224, C227, C230, C249, C254, C293, C298, C313, C316, C321, C324, H329, C334, C388, and C391 together coordinate Zn(2+). 2 consecutive RING-type zinc fingers follow at residues 204 to 249 (CGIC…CLNC) and 204 to 254 (CGIC…EPKC). The segment at 273–334 (ARYDRLLLQS…RRSYHGLSHC (62 aa)) adopts an IBR-type zinc-finger fold. The RING-type 2; atypical zinc finger occupies 388-417 (CPCCGTNIQKAHGCNKMTCSSCQKYFCWIC). The active site involves C401. Residues C406, C409, C414, C417, H429, and C437 each coordinate Zn(2+).

This sequence belongs to the RBR family. RNF14 subfamily.

It is found in the cytoplasm. The protein localises to the nucleus. The enzyme catalyses [E2 ubiquitin-conjugating enzyme]-S-ubiquitinyl-L-cysteine + [acceptor protein]-L-lysine = [E2 ubiquitin-conjugating enzyme]-L-cysteine + [acceptor protein]-N(6)-ubiquitinyl-L-lysine.. It participates in protein modification; protein ubiquitination. Its function is as follows. E3 ubiquitin-protein ligase that plays a key role in the RNF14-RNF25 translation quality control pathway, a pathway that takes place when a ribosome has stalled during translation, and which promotes ubiquitination and degradation of translation factors on stalled ribosomes. Recruited to stalled ribosomes by the ribosome collision sensor GCN1 and mediates 'Lys-6'-linked ubiquitination of target proteins, leading to their degradation. Mediates ubiquitination of eef1a1/eEF1A and etf1/eRF1 translation factors on stalled ribosomes, leading to their degradation. Specifically required to resolve RNA-protein cross-links caused by reactive aldehydes, which trigger translation stress by stalling ribosomes: acts by catalying 'Lys-6'-linked ubiquitination of RNA-protein cross-links, leading to their removal by the ATP-dependent unfoldase VCP and subsequent degradation by the proteasome. Independently of its function in the response to stalled ribosomes, acts as a regulator of transcription in Wnt signaling via its interaction with TCF transcription factors (tcf7/tcf1, tcf7l1/tcf3 and tcf7l2/tcf4). The sequence is that of E3 ubiquitin-protein ligase RNF14 from Danio rerio (Zebrafish).